Here is a 204-residue protein sequence, read N- to C-terminus: Protein C (204 aa).

A disordered region spans residues 1–75; the sequence is MPSFLRGILR…TTKTEQSQRR (75 aa). Over residues 10–20 the composition is skewed to basic and acidic residues; the sequence is RPKERHHENKN. Residues 25 to 34 are compositionally biased toward low complexity; that stretch reads SSDSLTSSYP. Residues 60–70 show a composition bias toward polar residues; the sequence is HANLTITTKTE.

The protein belongs to the respirovirus protein C family.

This Homo sapiens (Human) protein is Protein C (P/V/C).